Consider the following 461-residue polypeptide: Aspartyl/glutamyl-tRNA(Asn/Gln) amidotransferase subunit B (461 aa).

The protein belongs to the GatB/GatE family. GatB subfamily. In terms of assembly, heterotrimer of A, B and C subunits.

The enzyme catalyses L-glutamyl-tRNA(Gln) + L-glutamine + ATP + H2O = L-glutaminyl-tRNA(Gln) + L-glutamate + ADP + phosphate + H(+). It catalyses the reaction L-aspartyl-tRNA(Asn) + L-glutamine + ATP + H2O = L-asparaginyl-tRNA(Asn) + L-glutamate + ADP + phosphate + 2 H(+). Its function is as follows. Allows the formation of correctly charged Asn-tRNA(Asn) or Gln-tRNA(Gln) through the transamidation of misacylated Asp-tRNA(Asn) or Glu-tRNA(Gln) in organisms which lack either or both of asparaginyl-tRNA or glutaminyl-tRNA synthetases. The reaction takes place in the presence of glutamine and ATP through an activated phospho-Asp-tRNA(Asn) or phospho-Glu-tRNA(Gln). This is Aspartyl/glutamyl-tRNA(Asn/Gln) amidotransferase subunit B from Methanopyrus kandleri (strain AV19 / DSM 6324 / JCM 9639 / NBRC 100938).